Here is a 432-residue protein sequence, read N- to C-terminus: Glutamate--cysteine ligase EgtA (432 aa).

This sequence belongs to the glutamate--cysteine ligase type 2 family. EgtA subfamily.

The enzyme catalyses L-cysteine + L-glutamate + ATP = gamma-L-glutamyl-L-cysteine + ADP + phosphate + H(+). The protein operates within amino-acid biosynthesis; ergothioneine biosynthesis. Catalyzes the synthesis of gamma-glutamylcysteine (gamma-GC) which is used as substrate for the biosynthesis of the low-molecular thiol compound ergothioneine (ERG). ERG is one of the major redox buffers which protects bacteria against redox stressors and antibiotics; loss of ERG or mycothiol (MSH, the other major redox buffer in this bacteria) leads to respiratory alterations and bioenergetic deficiencies that negatively impact virulence. This chain is Glutamate--cysteine ligase EgtA (egtA), found in Mycobacterium tuberculosis (strain CDC 1551 / Oshkosh).